A 354-amino-acid polypeptide reads, in one-letter code: Uroporphyrinogen decarboxylase (354 aa).

Substrate is bound by residues 27 to 31, Asp77, Tyr154, Thr209, and His327; that span reads RQAGR.

This sequence belongs to the uroporphyrinogen decarboxylase family. As to quaternary structure, homodimer.

The protein localises to the cytoplasm. The enzyme catalyses uroporphyrinogen III + 4 H(+) = coproporphyrinogen III + 4 CO2. It participates in porphyrin-containing compound metabolism; protoporphyrin-IX biosynthesis; coproporphyrinogen-III from 5-aminolevulinate: step 4/4. In terms of biological role, catalyzes the decarboxylation of four acetate groups of uroporphyrinogen-III to yield coproporphyrinogen-III. In Pectobacterium carotovorum subsp. carotovorum (strain PC1), this protein is Uroporphyrinogen decarboxylase.